The following is a 172-amino-acid chain: Shikimate kinase (172 aa).

14–19 (GAGKST) is a binding site for ATP. S18 is a binding site for Mg(2+). Residues D36, R60, and G82 each coordinate substrate. R120 contributes to the ATP binding site. R139 provides a ligand contact to substrate. Q156 is a binding site for ATP.

The protein belongs to the shikimate kinase family. As to quaternary structure, monomer. Mg(2+) serves as cofactor.

It localises to the cytoplasm. It carries out the reaction shikimate + ATP = 3-phosphoshikimate + ADP + H(+). It participates in metabolic intermediate biosynthesis; chorismate biosynthesis; chorismate from D-erythrose 4-phosphate and phosphoenolpyruvate: step 5/7. Its function is as follows. Catalyzes the specific phosphorylation of the 3-hydroxyl group of shikimic acid using ATP as a cosubstrate. The polypeptide is Shikimate kinase (Aliivibrio fischeri (strain ATCC 700601 / ES114) (Vibrio fischeri)).